Reading from the N-terminus, the 458-residue chain is Elongation factor 1-alpha (458 aa).

Gly-2 is subject to N,N,N-trimethylglycine. Lys-3 is subject to N6,N6-dimethyllysine; alternate. Lys-3 carries the N6-methyllysine; alternate modification. A tr-type G domain is found at 5–240; it reads KTHVNVVVIG…DAIEPPVRPS (236 aa). The segment at 14–21 is G1; the sequence is GHVDSGKS. Residue 14–21 participates in GTP binding; sequence GHVDSGKS. The residue at position 30 (Lys-30) is an N6-methyllysine. Residues 70–74 are G2; the sequence is GITID. Lys-79 is subject to N6,N6,N6-trimethyllysine. The interval 91 to 94 is G3; that stretch reads DAPG. GTP-binding positions include 91-95 and 153-156; these read DAPGH and NKMD. Positions 153–156 are G4; the sequence is NKMD. Residues 192 to 194 are G5; the sequence is SGW. At Lys-316 the chain carries N6,N6-dimethyllysine; alternate. Residue Lys-316 is modified to N6-methyllysine; alternate. N6-methyllysine is present on Lys-390.

Belongs to the TRAFAC class translation factor GTPase superfamily. Classic translation factor GTPase family. EF-Tu/EF-1A subfamily.

It is found in the cytoplasm. This protein promotes the GTP-dependent binding of aminoacyl-tRNA to the A-site of ribosomes during protein biosynthesis. This chain is Elongation factor 1-alpha (TEF-2), found in Mucor circinelloides f. lusitanicus (Mucor racemosus var. lusitanicus).